The sequence spans 536 residues: Chaperonin GroEL 2 (536 aa).

Residues 29 to 32 (TLGP), 86 to 90 (DGTTT), Gly412, and Asp495 contribute to the ATP site.

It belongs to the chaperonin (HSP60) family. Forms a cylinder of 14 subunits composed of two heptameric rings stacked back-to-back. Interacts with the co-chaperonin GroES.

The protein localises to the cytoplasm. It carries out the reaction ATP + H2O + a folded polypeptide = ADP + phosphate + an unfolded polypeptide.. Functionally, together with its co-chaperonin GroES, plays an essential role in assisting protein folding. The GroEL-GroES system forms a nano-cage that allows encapsulation of the non-native substrate proteins and provides a physical environment optimized to promote and accelerate protein folding. This Arthrobacter sp. (strain FB24) protein is Chaperonin GroEL 2.